We begin with the raw amino-acid sequence, 429 residues long: MDTRRILEHPVLAPVLSVTFNHDNSCFAVGLDHGFRIYESGSCVLRTSRDFGAGIGMVQMLGRTNILGLVGGGRQTKLSRNKLVLWDDKSKKQVGVISASSLVRGAKMSSKRIVLVLMDRVQVYQTAKPHPLLSTYETTDNPLGLCCLSSDRIAFPGRAIGHVQLVEVETGNVSIITAHTSALRAMALSQDGELLATASEMGTIIRVYATSNCARLYELRRGIDKAIIFSIGFSPSGKYLACTSDKSTLHVFDVTRPGGTRPITSNGGTAYAAGEPSVTGNNRPSSPYSVASSSGGGGGVMVNSNNGGSDMAADDGQGRWGFLSKLPLMPRIFSDPYSFASAKFEMADEPVSNGSREPLTRDGGLAIIGGPLKGNLGWISETEMVVIGAGRDPKWEKFAIQEGGQQDGYQGGGRRLVRVGWKRYGGETP.

WD repeat units follow at residues 10–48 (PVLA…LRTS), 50–96 (DFGA…QVGV), 178–218 (AHTS…RLYE), and 223–262 (IDKA…GTRP). The interval 262–297 (PITSNGGTAYAAGEPSVTGNNRPSSPYSVASSSGGG) is disordered.

Belongs to the WD repeat PROPPIN family.

Its subcellular location is the vacuole membrane. It localises to the cytoplasmic vesicle membrane. Its function is as follows. Involved in mitochondrial or peroxisomal functions and amino acid signaling pathways. This is SVP1-like protein 2 (apg-14) from Neurospora crassa (strain ATCC 24698 / 74-OR23-1A / CBS 708.71 / DSM 1257 / FGSC 987).